The chain runs to 126 residues: Small ribosomal subunit protein uS13 (126 aa).

The segment at 96 to 126 is disordered; the sequence is LPVHGQRTHTNARTRKGPRRAIAGKKKAGKK.

This sequence belongs to the universal ribosomal protein uS13 family. In terms of assembly, part of the 30S ribosomal subunit. Forms a loose heterodimer with protein S19. Forms two bridges to the 50S subunit in the 70S ribosome.

Its function is as follows. Located at the top of the head of the 30S subunit, it contacts several helices of the 16S rRNA. In the 70S ribosome it contacts the 23S rRNA (bridge B1a) and protein L5 of the 50S subunit (bridge B1b), connecting the 2 subunits; these bridges are implicated in subunit movement. Contacts the tRNAs in the A and P-sites. This chain is Small ribosomal subunit protein uS13, found in Frankia alni (strain DSM 45986 / CECT 9034 / ACN14a).